The sequence spans 359 residues: Biotin synthase (359 aa).

The disordered stretch occupies residues 1-23 (MSVADSSAADSVAAPDTADTSSS). The region spanning 76-302 (YFGNTVQLYF…VNPDRELRIA (227 aa)) is the Radical SAM core domain. Residues Cys-94, Cys-98, and Cys-101 each coordinate [4Fe-4S] cluster. [2Fe-2S] cluster contacts are provided by Cys-138, Cys-170, Cys-230, and Arg-300.

The protein belongs to the radical SAM superfamily. Biotin synthase family. As to quaternary structure, homodimer. Requires [4Fe-4S] cluster as cofactor. The cofactor is [2Fe-2S] cluster.

The enzyme catalyses (4R,5S)-dethiobiotin + (sulfur carrier)-SH + 2 reduced [2Fe-2S]-[ferredoxin] + 2 S-adenosyl-L-methionine = (sulfur carrier)-H + biotin + 2 5'-deoxyadenosine + 2 L-methionine + 2 oxidized [2Fe-2S]-[ferredoxin]. The protein operates within cofactor biosynthesis; biotin biosynthesis; biotin from 7,8-diaminononanoate: step 2/2. Functionally, catalyzes the conversion of dethiobiotin (DTB) to biotin by the insertion of a sulfur atom into dethiobiotin via a radical-based mechanism. The chain is Biotin synthase from Rhodopirellula baltica (strain DSM 10527 / NCIMB 13988 / SH1).